A 511-amino-acid polypeptide reads, in one-letter code: Maturase K (511 aa).

Belongs to the intron maturase 2 family. MatK subfamily.

Its subcellular location is the plastid. It is found in the chloroplast. In terms of biological role, usually encoded in the trnK tRNA gene intron. Probably assists in splicing its own and other chloroplast group II introns. The protein is Maturase K of Diplacus aurantiacus (Orange bush monkey flower).